The following is a 444-amino-acid chain: Methylenetetrahydrofolate--tRNA-(uracil-5-)-methyltransferase TrmFO (444 aa).

An FAD-binding site is contributed by G10–G15.

It belongs to the MnmG family. TrmFO subfamily. FAD is required as a cofactor.

It localises to the cytoplasm. It carries out the reaction uridine(54) in tRNA + (6R)-5,10-methylene-5,6,7,8-tetrahydrofolate + NADH + H(+) = 5-methyluridine(54) in tRNA + (6S)-5,6,7,8-tetrahydrofolate + NAD(+). The catalysed reaction is uridine(54) in tRNA + (6R)-5,10-methylene-5,6,7,8-tetrahydrofolate + NADPH + H(+) = 5-methyluridine(54) in tRNA + (6S)-5,6,7,8-tetrahydrofolate + NADP(+). In terms of biological role, catalyzes the folate-dependent formation of 5-methyl-uridine at position 54 (M-5-U54) in all tRNAs. This Streptococcus uberis (strain ATCC BAA-854 / 0140J) protein is Methylenetetrahydrofolate--tRNA-(uracil-5-)-methyltransferase TrmFO.